A 446-amino-acid polypeptide reads, in one-letter code: Transcription factor Dp-2 (446 aa).

N-acetylthreonine is present on T2. Phosphoserine; by CDK2 is present on residues S24 and S42. Residues P60 to Y82 form an interaction with CEBPA region. Residues S103–E118 carry the Nuclear localization signal motif. The residue at position 122 (S122) is a Phosphoserine. The DNA-binding element occupies G129–D210. The short motif at D176–D210 is the DEF box element. The dimerization stretch occupies residues N219–S292. The DCB1 stretch occupies residues E229 to Q261. The tract at residues L274–S330 is DCB2. Positions L404 to E446 are disordered. The span at A406–F419 shows a compositional bias: low complexity. Residues N431–E446 show a composition bias toward acidic residues.

This sequence belongs to the E2F/DP family. Component of the DRTF1/E2F transcription factor complex. Forms heterodimers with E2F family members. The complex can interact with hypophosphorylated retinoblastoma protein RB1 and related proteins (RBL1 and RBL2) that inhibit the E2F transactivation domain. During the cell cycle, RB becomes phosphorylated in mid-to-late G1 phase, detaches from the DRTF1/E2F complex rendering E2F transcriptionally active. Interacts with GMCL. Component of the DREAM complex (also named LINC complex) at least composed of E2F4, E2F5, LIN9, LIN37, LIN52, LIN54, MYBL1, MYBL2, RBL1, RBL2, RBBP4, TFDP1 and TFDP2. The complex exists in quiescent cells where it represses cell cycle-dependent genes. It dissociates in S phase when LIN9, LIN37, LIN52 and LIN54 form a subcomplex that binds to MYBL2. The complex TFDP2:E2F1 interacts with CEBPA; the interaction prevents CEBPA binding to target gene promoters and represses its transcriptional activity. Phosphorylation by E2F1-bound cyclin A-CDK2, in the S phase, inhibits E2F-mediated DNA binding and transactivation. As to expression, expressed in all tissues examined. Highest levels in spleen and heart.

It localises to the nucleus. Its function is as follows. Can stimulate E2F-dependent transcription. Binds DNA cooperatively with E2F family members through the E2 recognition site, 5'-TTTC[CG]CGC-3', found in the promoter region of a number of genes whose products are involved in cell cycle regulation or in DNA replication. The TFDP2:E2F complex functions in the control of cell-cycle progression from G1 to S phase. The E2F1:DP complex appears to mediate both cell proliferation and apoptosis. Blocks adipocyte differentiation by repressing CEBPA binding to its target gene promoters. The protein is Transcription factor Dp-2 (Tfdp2) of Mus musculus (Mouse).